Here is a 195-residue protein sequence, read N- to C-terminus: DnaJ homolog subfamily C member 5 (195 aa).

In terms of domain architecture, J spans 13-82 (GDSLYIVLGL…RNIYDKYGSL (70 aa)). The disordered stretch occupies residues 162–195 (DMEKEGDGAIVVQPTSATETTQLTSDSHPSYHTE). The span at 174-189 (QPTSATETTQLTSDSH) shows a compositional bias: polar residues.

In terms of processing, palmitoylated. Palmitoylation occurs probably in the cysteine-rich domain and regulates DNAJC5 stable membrane attachment.

Its subcellular location is the cytoplasm. It is found in the cytosol. It localises to the membrane. The protein resides in the cytoplasmic vesicle. The protein localises to the secretory vesicle. Its subcellular location is the chromaffin granule membrane. It is found in the melanosome. It localises to the cell membrane. In terms of biological role, may have an important role in presynaptic function. May be involved in calcium-dependent neurotransmitter release at nerve endings. The chain is DnaJ homolog subfamily C member 5 from Tetronarce californica (Pacific electric ray).